We begin with the raw amino-acid sequence, 258 residues long: MSKVKLTKESIVALLTQGKDLEFEEDQNLVAFNFKTFCLENLDQIKKMSIISCLTFLKNRQSIMKVIKQSDFTFGKITIKKTSDRIGATDMTFRRLDSLIRVRLVEETGNSENLNTIKSKIASHPLIQAYGLPLDDAKSVRLAIMLGGSLPLIASVDSFEMISVVLAIYQDAKYKDLGIDPKKYDTREALGKVCTVLKSKAFEMNEDQVKKGKEYAAILSSSNPNAKGSIAMEHYSETLNKFYEMFGVKKQAKLTELA.

This sequence belongs to the tospovirus nucleocapsid protein family. In terms of assembly, homotrimer. Binds the viral genomic RNA.

The protein localises to the virion. Encapsidates the genome protecting it from nucleases. The encapsidated genomic RNA is termed the nucleocapsid (NC) and serves as template for transcription and replication. The NC have a helical organization. This chain is Nucleoprotein (N), found in Frankliniella occidentalis (Western flower thrips).